The primary structure comprises 641 residues: WW domain-binding protein 11 (641 aa).

Positions 1–11 (MGRRSTSSTKS) are enriched in polar residues. The segment at 1–37 (MGRRSTSSTKSGKFMNPTDQARKEARKRELKKNKKQR) is disordered. Residues 1–45 (MGRRSTSSTKSGKFMNPTDQARKEARKRELKKNKKQRMMVRAAVL) form a required for nuclear import region. Lysine 13 is modified (N6-acetyllysine). Basic residues predominate over residues 28-37 (RELKKNKKQR). The stretch at 75–133 (EKVLKDKRKKLRETFERILRLYEKENPDIYKELRKLEVEYEQKRAQLSQYFDAVKNAQH) forms a coiled coil. Serine 181 bears the Phosphoserine mark. A disordered region spans residues 188–213 (HGVPRLPPGRKPPGPPPGPPPPQVLQ). The residue at position 192 (arginine 192) is an Omega-N-methylarginine. Positions 192 to 210 (RLPPGRKPPGPPPGPPPPQ) are enriched in pro residues. Positions 217–221 (RKVGF) are interaction with PP1. Tyrosine 236 is modified (phosphotyrosine). The segment at 236–550 (YSPELAQRGH…IQRPKADDAS (315 aa)) is disordered. Serine 237 is subject to Phosphoserine. The span at 253–263 (SEDDGYPEDMD) shows a compositional bias: acidic residues. Over residues 276 to 304 (TDRSDAESDGDEFGHREDSERDNTEEKKS) the composition is skewed to basic and acidic residues. Serine 279 and serine 283 each carry phosphoserine. Positions 306–310 (LSVRF) are interaction with PP1. Acidic residues predominate over residues 351 to 365 (EFSEEEDADDSDDSE). Phosphoserine is present on residues serine 353, serine 361, and serine 364. Positions 366-380 (AEKQSQKQHKDDGHS) are enriched in basic and acidic residues. The span at 381–404 (DSTAAASSQQQAPPQSAPASQIQA) shows a compositional bias: low complexity. 3 stretches are compositionally biased toward pro residues: residues 405–447 (PPMP…PPGM), 456–504 (RLLP…PPRP), and 510–530 (PLVP…PLPN). Residues 455 to 466 (PRLLPPGPPPGR) carry the PGR motif. A Glycyl lysine isopeptide (Lys-Gly) (interchain with G-Cter in SUMO2) cross-link involves residue lysine 557. N6-acetyllysine is present on lysine 565. Lysine 572 is covalently cross-linked (Glycyl lysine isopeptide (Lys-Gly) (interchain with G-Cter in SUMO2)). The tract at residues 588–620 (ENKGATAVPQRRSEDDSAVPVAKAAPRSGPSVA) is disordered. Serine 600 is modified (phosphoserine). Residues 633–641 (FMKEMEGLL) form a required for nuclear export region.

As to quaternary structure, interacts via the PGR motif with PQBP1 in the nucleus. Interacts with the WW domains of WBP4. Interacts with PPP1CA, PPP1CB and PPP1CC. In terms of tissue distribution, ubiquitously expressed, with highest levels in testis.

It localises to the nucleus. It is found in the cytoplasm. Activates pre-mRNA splicing. May inhibit PP1 phosphatase activity. The chain is WW domain-binding protein 11 (Wbp11) from Mus musculus (Mouse).